A 306-amino-acid chain; its full sequence is Elongation factor Ts (306 aa).

Residues 80-83 (TDFV) form an involved in Mg(2+) ion dislocation from EF-Tu region.

This sequence belongs to the EF-Ts family.

Its subcellular location is the cytoplasm. Functionally, associates with the EF-Tu.GDP complex and induces the exchange of GDP to GTP. It remains bound to the aminoacyl-tRNA.EF-Tu.GTP complex up to the GTP hydrolysis stage on the ribosome. The chain is Elongation factor Ts from Clostridium novyi (strain NT).